The sequence spans 176 residues: Large ribosomal subunit protein uL6 (176 aa).

It belongs to the universal ribosomal protein uL6 family. As to quaternary structure, part of the 50S ribosomal subunit.

This protein binds to the 23S rRNA, and is important in its secondary structure. It is located near the subunit interface in the base of the L7/L12 stalk, and near the tRNA binding site of the peptidyltransferase center. The sequence is that of Large ribosomal subunit protein uL6 from Burkholderia multivorans (strain ATCC 17616 / 249).